The chain runs to 82 residues: Defensin-like protein 275 (82 aa).

A signal peptide spans 1 to 23; the sequence is MALSKFQLVALLITYTLLFSCQS. Disulfide bonds link Cys-36/Cys-78, Cys-42/Cys-65, Cys-48/Cys-76, and Cys-52/Cys-77.

The protein belongs to the DEFL family.

Its subcellular location is the secreted. This Arabidopsis thaliana (Mouse-ear cress) protein is Defensin-like protein 275.